The sequence spans 326 residues: MLTLARQQQRQNIRWLLCLSVLMLLALLLSLCAGEQWISPGDWFTPRGELFVWQIRLPRTLAVLLVGAALAISGAVMQALFENPLAEPGLLGVSNGAGVGLIAAVLLGQGQLPNWALGLCAIAGALIITLILLRFARRHLSTSRLLLAGVALGIICSALMTWAIYFSTSVDLRQLMYWMMGGFGGVDWRQSWLMLALIPVLLWICCQSRPMNMLALGEISARQLGLPMWFWRNVLVAATGWMVGVSVALAGAIGFIGLVIPHILRLCGLTDHRVLLPGCALAGASALLLADIVARLALAAAELPIGVVTATLGAPVFIWLLLKAGR.

9 consecutive transmembrane segments (helical) span residues 13-35 (IRWL…CAGE), 55-77 (IRLP…GAVM), 90-107 (LLGV…AVLL), 111-133 (QLPN…LILL), 146-168 (LLAG…YFST), 188-205 (WRQS…LWIC), 242-264 (MVGV…PHIL), 274-296 (VLLP…VARL), and 303-322 (LPIG…WLLL).

Belongs to the binding-protein-dependent transport system permease family. FecCD subfamily. In terms of assembly, the complex is composed of two ATP-binding proteins (BtuD), two transmembrane proteins (BtuC) and a solute-binding protein (BtuF).

The protein localises to the cell inner membrane. In terms of biological role, part of the ABC transporter complex BtuCDF involved in vitamin B12 import. Involved in the translocation of the substrate across the membrane. In Shigella flexneri, this protein is Vitamin B12 import system permease protein BtuC.